The following is a 240-amino-acid chain: Protein GrpE (240 aa).

Positions Met1–Gln13 are enriched in polar residues. The interval Met1–Trp89 is disordered. The segment covering Ala20–Ala38 has biased composition (low complexity). A compositionally biased stretch (basic and acidic residues) spans Glu65–Trp89.

It belongs to the GrpE family. Homodimer.

The protein resides in the cytoplasm. Its function is as follows. Participates actively in the response to hyperosmotic and heat shock by preventing the aggregation of stress-denatured proteins, in association with DnaK and GrpE. It is the nucleotide exchange factor for DnaK and may function as a thermosensor. Unfolded proteins bind initially to DnaJ; upon interaction with the DnaJ-bound protein, DnaK hydrolyzes its bound ATP, resulting in the formation of a stable complex. GrpE releases ADP from DnaK; ATP binding to DnaK triggers the release of the substrate protein, thus completing the reaction cycle. Several rounds of ATP-dependent interactions between DnaJ, DnaK and GrpE are required for fully efficient folding. The sequence is that of Protein GrpE from Halorhodospira halophila (strain DSM 244 / SL1) (Ectothiorhodospira halophila (strain DSM 244 / SL1)).